Reading from the N-terminus, the 548-residue chain is Chaperonin GroEL (548 aa).

Residues threonine 29–proline 32, lysine 50, aspartate 86–threonine 90, glycine 414, asparagine 478–alanine 480, and aspartate 494 contribute to the ATP site.

It belongs to the chaperonin (HSP60) family. In terms of assembly, forms a cylinder of 14 subunits composed of two heptameric rings stacked back-to-back. Interacts with the co-chaperonin GroES.

It localises to the cytoplasm. The catalysed reaction is ATP + H2O + a folded polypeptide = ADP + phosphate + an unfolded polypeptide.. Its function is as follows. Together with its co-chaperonin GroES, plays an essential role in assisting protein folding. The GroEL-GroES system forms a nano-cage that allows encapsulation of the non-native substrate proteins and provides a physical environment optimized to promote and accelerate protein folding. This Legionella pneumophila (strain Corby) protein is Chaperonin GroEL.